A 199-amino-acid polypeptide reads, in one-letter code: Prolactin (199 aa).

A disulfide bond links C4 and C11. S26 carries the phosphoserine modification. Residue N31 is glycosylated (N-linked (GlcNAc...) asparagine; partial). Residues S34 and S90 each carry the phosphoserine modification. Cystine bridges form between C58-C174 and C191-C199.

It belongs to the somatotropin/prolactin family. Interacts with PRLR.

Its subcellular location is the secreted. In terms of biological role, prolactin acts primarily on the mammary gland by promoting lactation. The protein is Prolactin (PRL) of Camelus dromedarius (Dromedary).